Consider the following 468-residue polypeptide: Zinc finger protein 672 (468 aa).

4 consecutive C2H2-type zinc fingers follow at residues 15–37, 43–65, 71–93, and 100–123; these read YSCS…ERAH, FCCL…RWTH, YICS…LGTH, and RPCR…ARQH. The C2H2-type 5; degenerate zinc finger occupies 129-151; sequence HRCPLCARSFRQSALPFHLARAH. 9 consecutive C2H2-type zinc fingers follow at residues 167 to 189, 202 to 224, 230 to 252, 258 to 280, 286 to 308, 314 to 336, 342 to 364, 370 to 392, and 398 to 420; these read YHCT…SRIH, HLCG…LQRH, FKCP…QRTH, YACS…QRSH, HVCA…QRSH, FPCP…LRTH, YHCE…LRNH, HKCP…RKTH, and AECT…QRSH.

This sequence belongs to the krueppel C2H2-type zinc-finger protein family.

The protein resides in the nucleus. Functionally, may be involved in transcriptional regulation. This is Zinc finger protein 672 (Znf672) from Mus musculus (Mouse).